A 577-amino-acid chain; its full sequence is Arginine--tRNA ligase (577 aa).

A 'HIGH' region motif is present at residues 122–132 (PNVAKEMHVGH).

Belongs to the class-I aminoacyl-tRNA synthetase family. Monomer.

Its subcellular location is the cytoplasm. The catalysed reaction is tRNA(Arg) + L-arginine + ATP = L-arginyl-tRNA(Arg) + AMP + diphosphate. This is Arginine--tRNA ligase from Shigella flexneri.